We begin with the raw amino-acid sequence, 554 residues long: (E)-beta-caryophyllene synthase (554 aa).

Mn(2+)-binding residues include Asp313 and Asp317. The DDXXD motif motif lies at 313-317; that stretch reads DDTYD. Homodimerization stretches follow at residues 319–325 and 391–427; these read YGTLDEL and EAQW…LAVI. Mn(2+) contacts are provided by Asp457 and Glu465.

The protein belongs to the terpene synthase family. In terms of assembly, homodimer. Requires Mn(2+) as cofactor. Mg(2+) is required as a cofactor. Expressed in peltate glandular trichomes. Present at low levels in flowers, leaves and stems.

The catalysed reaction is (2E,6E)-farnesyl diphosphate = (-)-(E)-beta-caryophyllene + diphosphate. The enzyme catalyses (2E,6E)-farnesyl diphosphate = alpha-humulene + diphosphate. It functions in the pathway secondary metabolite biosynthesis; terpenoid biosynthesis. Functionally, involved in the biosynthesis of phenolic sesquiterpenes natural products. Sesquiterpene synthase converting (2E,6E)-farnesyl diphosphate (FPP) to (E)-beta-caryophyllene and alpha-humulene. This chain is (E)-beta-caryophyllene synthase, found in Origanum vulgare (Wild marjoram).